The primary structure comprises 529 residues: Beta-galactoside alpha-2,6-sialyltransferase 2 (529 aa).

The Cytoplasmic segment spans residues 1-11; the sequence is MKPHLKQWRQR. The chain crosses the membrane as a helical; Signal-anchor for type II membrane protein span at residues 12 to 32; that stretch reads MLFGIFAWGLLFLLIFIYFTD. At 33-529 the chain is on the lumenal side; sequence SNPAEPVPSS…PAPSPVIPHS (497 aa). S69 is a glycosylation site (O-linked (GalNAc...) serine). N211 carries an N-linked (GlcNAc...) asparagine glycan. 3 disulfides stabilise this stretch: C253-C519, C296-C448, and C466-C477.

The protein belongs to the glycosyltransferase 29 family. In terms of processing, O-glycosylated. Weakly expressed in some tissues, such as small intestine, colon and fetal brain.

Its subcellular location is the golgi apparatus. It is found in the golgi stack membrane. It catalyses the reaction a beta-D-galactoside + CMP-N-acetyl-beta-neuraminate = an N-acetyl-alpha-neuraminyl-(2-&gt;6)-beta-D-galactosyl derivative + CMP + H(+). In terms of biological role, transfers sialic acid from the donor of substrate CMP-sialic acid to galactose containing acceptor substrates. Has alpha-2,6-sialyltransferase activity toward oligosaccharides that have the Gal-beta-1,4-GlcNAc sequence at the non-reducing end of their carbohydrate groups, but it has weak or no activities toward glycoproteins and glycolipids. This is Beta-galactoside alpha-2,6-sialyltransferase 2 (ST6GAL2) from Homo sapiens (Human).